A 66-amino-acid polypeptide reads, in one-letter code: Large ribosomal subunit protein uL29 (66 aa).

This sequence belongs to the universal ribosomal protein uL29 family.

This chain is Large ribosomal subunit protein uL29, found in Pseudothermotoga lettingae (strain ATCC BAA-301 / DSM 14385 / NBRC 107922 / TMO) (Thermotoga lettingae).